We begin with the raw amino-acid sequence, 64 residues long: DNA-directed RNA polymerase subunit omega (64 aa).

Belongs to the RNA polymerase subunit omega family. In terms of assembly, the RNAP catalytic core consists of 2 alpha, 1 beta, 1 beta' and 1 omega subunit. When a sigma factor is associated with the core the holoenzyme is formed, which can initiate transcription.

The catalysed reaction is RNA(n) + a ribonucleoside 5'-triphosphate = RNA(n+1) + diphosphate. In terms of biological role, promotes RNA polymerase assembly. Latches the N- and C-terminal regions of the beta' subunit thereby facilitating its interaction with the beta and alpha subunits. This Oceanobacillus iheyensis (strain DSM 14371 / CIP 107618 / JCM 11309 / KCTC 3954 / HTE831) protein is DNA-directed RNA polymerase subunit omega.